A 468-amino-acid chain; its full sequence is Argininosuccinate lyase (468 aa).

Belongs to the lyase 1 family. Argininosuccinate lyase subfamily.

It localises to the cytoplasm. The catalysed reaction is 2-(N(omega)-L-arginino)succinate = fumarate + L-arginine. Its pathway is amino-acid biosynthesis; L-arginine biosynthesis; L-arginine from L-ornithine and carbamoyl phosphate: step 3/3. This Zymomonas mobilis subsp. mobilis (strain ATCC 31821 / ZM4 / CP4) protein is Argininosuccinate lyase.